A 1161-amino-acid polypeptide reads, in one-letter code: Auxin response factor 19 (1161 aa).

Residues 1–20 (MMKQAQQQPPPPPASSAATT) are disordered. The segment at residues 154 to 256 (FCKTLTASDT…QLLLGIRRAN (103 aa)) is a DNA-binding region (TF-B3). Residues 573–598 (NQMQQQHASSTQGQQPATSQPLLLPQ) form a disordered region. The region spanning 1027 to 1111 (RTFTKVYKRG…KCIRILSPQE (85 aa)) is the PB1 domain.

It belongs to the ARF family. As to quaternary structure, homodimers and heterodimers. Expressed in roots, culms, leaves and young panicles.

It localises to the nucleus. Its function is as follows. Auxin response factors (ARFs) are transcriptional factors that bind specifically to the DNA sequence 5'-TGTCTC-3' found in the auxin-responsive promoter elements (AuxREs). The polypeptide is Auxin response factor 19 (ARF19) (Oryza sativa subsp. japonica (Rice)).